A 211-amino-acid chain; its full sequence is Regulator of G-protein signaling 2 (211 aa).

2 disordered regions span residues 14-33 and 49-71; these read GPMD…REKM and LQNS…TFIK. The tract at residues 32 to 66 is necessary for membrane association; the sequence is KMKRTLLKDWKSRLSYFLQNSSSPGKPKTGKKSKQ. The interval 79-116 is necessary to inhibit protein synthesis; the sequence is LWSEAFDELLASKYGLAAFRAFLKSEFCEENIEFWLAC. An RGS domain is found at 83–199; that stretch reads AFDELLASKY…LESEFYQDLC (117 aa).

As to quaternary structure, interacts with GNAQ. Does not interact with GNAI1 and GNAI3. Interacts with EIF2B5. Interacts with PRKG1 (isoform alpha). In terms of processing, phosphorylated by protein kinase C. Phosphorylation by PRKG1 leads to activation of RGS2 activity.

The protein resides in the cell membrane. It localises to the cytoplasm. The protein localises to the nucleus. It is found in the nucleolus. Its function is as follows. Regulates G protein-coupled receptor signaling cascades. Inhibits signal transduction by increasing the GTPase activity of G protein alpha subunits, thereby driving them into their inactive GDP-bound form. It is involved in the negative regulation of the angiotensin-activated signaling pathway. Plays a role in the regulation of blood pressure in response to signaling via G protein-coupled receptors and GNAQ. Plays a role in regulating the constriction and relaxation of vascular smooth muscle. Binds EIF2B5 and blocks its activity, thereby inhibiting the translation of mRNA into protein. In Bos taurus (Bovine), this protein is Regulator of G-protein signaling 2 (RGS2).